The following is a 244-amino-acid chain: 1-(5-phosphoribosyl)-5-[(5-phosphoribosylamino)methylideneamino] imidazole-4-carboxamide isomerase (244 aa).

The active-site Proton acceptor is Asp7. The Proton donor role is filled by Asp129.

The protein belongs to the HisA/HisF family.

The protein localises to the cytoplasm. It catalyses the reaction 1-(5-phospho-beta-D-ribosyl)-5-[(5-phospho-beta-D-ribosylamino)methylideneamino]imidazole-4-carboxamide = 5-[(5-phospho-1-deoxy-D-ribulos-1-ylimino)methylamino]-1-(5-phospho-beta-D-ribosyl)imidazole-4-carboxamide. It participates in amino-acid biosynthesis; L-histidine biosynthesis; L-histidine from 5-phospho-alpha-D-ribose 1-diphosphate: step 4/9. This is 1-(5-phosphoribosyl)-5-[(5-phosphoribosylamino)methylideneamino] imidazole-4-carboxamide isomerase from Pseudoalteromonas atlantica (strain T6c / ATCC BAA-1087).